Consider the following 188-residue polypeptide: Probable DNA-directed RNA polymerase subunit delta (188 aa).

The HTH HARE-type domain occupies 14–83; sequence LSMIEVARAI…GENKWGLRSW (70 aa). Positions 119 to 188 are disordered; that stretch reads EDAIDYSADD…EDEEDEDEEE (70 aa).

The protein belongs to the RpoE family. RNAP is composed of a core of 2 alpha, a beta and a beta' subunits. The core is associated with a delta subunit and one of several sigma factors.

Functionally, participates in both the initiation and recycling phases of transcription. In the presence of the delta subunit, RNAP displays an increased specificity of transcription, a decreased affinity for nucleic acids, and an increased efficiency of RNA synthesis because of enhanced recycling. This is Probable DNA-directed RNA polymerase subunit delta from Streptococcus equi subsp. zooepidemicus (strain H70).